We begin with the raw amino-acid sequence, 234 residues long: Leucyl/phenylalanyl-tRNA--protein transferase (234 aa).

The protein belongs to the L/F-transferase family.

It is found in the cytoplasm. The catalysed reaction is N-terminal L-lysyl-[protein] + L-leucyl-tRNA(Leu) = N-terminal L-leucyl-L-lysyl-[protein] + tRNA(Leu) + H(+). The enzyme catalyses N-terminal L-arginyl-[protein] + L-leucyl-tRNA(Leu) = N-terminal L-leucyl-L-arginyl-[protein] + tRNA(Leu) + H(+). It carries out the reaction L-phenylalanyl-tRNA(Phe) + an N-terminal L-alpha-aminoacyl-[protein] = an N-terminal L-phenylalanyl-L-alpha-aminoacyl-[protein] + tRNA(Phe). Functionally, functions in the N-end rule pathway of protein degradation where it conjugates Leu, Phe and, less efficiently, Met from aminoacyl-tRNAs to the N-termini of proteins containing an N-terminal arginine or lysine. The chain is Leucyl/phenylalanyl-tRNA--protein transferase from Escherichia coli O7:K1 (strain IAI39 / ExPEC).